Here is a 167-residue protein sequence, read N- to C-terminus: uncharacterized protein (167 aa).

Positions 115-167 are disordered; it reads SYRSQPQLGFKSTPPAHSSVFHHSVKAPKEDQAQEAASRPLTSQDGWNPNIKK.

This is an uncharacterized protein from Homo sapiens (Human).